The chain runs to 487 residues: Malonate-semialdehyde dehydrogenase (487 aa).

The NAD(+) site is built by Ala150, Phe152, Lys176, Glu179, Arg180, Ser229, and Thr251. Cys284 serves as the catalytic Nucleophile. Position 382 (Glu382) interacts with NAD(+).

It belongs to the aldehyde dehydrogenase family. IolA subfamily. As to quaternary structure, homotetramer.

The enzyme catalyses 3-oxopropanoate + NAD(+) + CoA + H2O = hydrogencarbonate + acetyl-CoA + NADH + H(+). The catalysed reaction is 2-methyl-3-oxopropanoate + NAD(+) + CoA + H2O = propanoyl-CoA + hydrogencarbonate + NADH + H(+). Its pathway is polyol metabolism; myo-inositol degradation into acetyl-CoA; acetyl-CoA from myo-inositol: step 7/7. Catalyzes the oxidation of malonate semialdehyde (MSA) and methylmalonate semialdehyde (MMSA) into acetyl-CoA and propanoyl-CoA, respectively. Is involved in a myo-inositol catabolic pathway. Bicarbonate, and not CO2, is the end-product of the enzymatic reaction. The sequence is that of Malonate-semialdehyde dehydrogenase from Bacillus velezensis (strain DSM 23117 / BGSC 10A6 / LMG 26770 / FZB42) (Bacillus amyloliquefaciens subsp. plantarum).